Reading from the N-terminus, the 459-residue chain is Jacalin-related lectin 12 (459 aa).

3 consecutive Jacalin-type lectin domains span residues 2 to 148, 151 to 296, and 298 to 443; these read SQDS…YFTP, PTRM…YITT, and TLTK…YSFP.

It belongs to the jacalin lectin family.

The polypeptide is Jacalin-related lectin 12 (JAL12) (Arabidopsis thaliana (Mouse-ear cress)).